The sequence spans 176 residues: Sigma intracellular receptor 2 (176 aa).

The Cytoplasmic segment spans residues 1–9 (MGTLGARRG). Residues 10–30 (LEWFLGFYFLSHIPITLLMDL) form a helical membrane-spanning segment. An EXPERA domain is found at 10 to 158 (LEWFLGFYFL…PYFLIPLILL (149 aa)). The Lumenal portion of the chain corresponds to 31 to 68 (QGVLPRDLYPVELRNLQQWYIEEFKDPLLQTPPAWFKS). A helical membrane pass occupies residues 69–89 (FLFCELVFQLPFFPIAAYAFF). Positions 75 and 77 each coordinate cholesterol. Residues 90-99 (KGGCKWIRTP) are Cytoplasmic-facing. A helical membrane pass occupies residues 100 to 120 (AIIYSVHTMTTLIPILSTLLL). The Lumenal portion of the chain corresponds to 121–141 (DDFSKASHFRGQGPKTFQERL). The chain crosses the membrane as a helical span at residues 142–162 (FLISVYIPYFLIPLILLLFMV). At 163–176 (RNPYYKSEEKRKKK) the chain is on the cytoplasmic side. The ER retention motif motif lies at 172–176 (KRKKK).

Belongs to the TMEM97/sigma-2 receptor family. As to quaternary structure, homodimer. Interacts with NPC1; the interaction impairs NPC1-mediated cholesterol transport. Interacts with PGRMC1 and LDLR; the interaction increases LDL internalization. Interacts with histatin 1/HTN1; the interaction induces HTN1-stimulating wound healing. Interacts with TSPO.

The protein localises to the rough endoplasmic reticulum membrane. Its subcellular location is the nucleus membrane. Functionally, sigma-2 receptor which contributes to ameliorate dysfunctional cellular processes and slow degenerative progression by regulating cell functions including cholesterol biosynthesis/trafficking, membrane trafficking, autophagy, lipid membrane-bound protein trafficking, and receptor stabilization at the cell surface. Forms a ternary complex with PGRMC1 receptor and low density lipoprotein receptor/LDLR at the plasma membrane, which increases LDLR-mediated LDL cholesterol internalization. Decreases lysosomal sterol transporter NPC1 availability to the cell, probably through NPC1-binding, hence controlling lipid transport, including cholesterol and LBPA, outside of late endosome/lysosome. Binds regio- and stereoselective ligand 20(S)-hydroxycholesterol (20(S)-OHC) which enhances TMEM97-NPC1 interaction and decreases TMEM97-PGRMC1 and TMEM97-TSPO interactions, thereby linking OHC binding to cholesterol homeostasis. Also able to bind cholesterol. Binds histatin 1 (Hst 1)/HN1 salivary peptide at the ER membrane, which is critical for increasing mitochondria-ER contacts and stimulating Hst1 wound healing properties. May alter the activity of some cytochrome P450 proteins. Although shows homologies with sterol isomerases (EXPERA domain), not able to catalyze sterol isomerization. However, may act as sensors of these molecules. Acts as a quality control factor in the ER, promoting the proteolytic degradation of nonproductive and extramitochondrial precursor proteins in the ER membrane thus removing them from the ER surface. In Bos taurus (Bovine), this protein is Sigma intracellular receptor 2 (TMEM97).